A 463-amino-acid polypeptide reads, in one-letter code: UDP-N-acetylmuramate--L-alanine ligase (463 aa).

An ATP-binding site is contributed by 112 to 118 (GTHGKTT).

It belongs to the MurCDEF family.

The protein localises to the cytoplasm. It catalyses the reaction UDP-N-acetyl-alpha-D-muramate + L-alanine + ATP = UDP-N-acetyl-alpha-D-muramoyl-L-alanine + ADP + phosphate + H(+). It participates in cell wall biogenesis; peptidoglycan biosynthesis. Functionally, cell wall formation. This chain is UDP-N-acetylmuramate--L-alanine ligase, found in Thiobacillus denitrificans (strain ATCC 25259 / T1).